The sequence spans 698 residues: RNA cytosine-C(5)-methyltransferase NSUN2 (698 aa).

The segment covering 1 to 10 (MGRKNRRNRQ) has biased composition (basic residues). The interval 1 to 28 (MGRKNRRNRQRRTEQRSPAEEERRKARE) is disordered. Positions 11-28 (RRTEQRSPAEEERRKARE) are enriched in basic and acidic residues. S-adenosyl-L-methionine contacts are provided by residues 182-188 (CAAPGSK), Asp213, Asp240, and Asp266. Residue Cys319 is the Nucleophile of the active site. Residues 472-496 (AVDAENGETKPCTNQSGSSKTDSVC) form a disordered region. Residues 482–493 (PCTNQSGSSKTD) are compositionally biased toward polar residues.

The protein belongs to the class I-like SAM-binding methyltransferase superfamily. RsmB/NOP family. TRM4 subfamily.

It localises to the nucleus. Its subcellular location is the nucleolus. It is found in the cytoplasm. The protein localises to the mitochondrion. The protein resides in the cytoskeleton. It localises to the spindle. Its subcellular location is the secreted. It is found in the extracellular exosome. It carries out the reaction cytidine(48) in tRNA + S-adenosyl-L-methionine = 5-methylcytidine(48) in tRNA + S-adenosyl-L-homocysteine + H(+). The catalysed reaction is cytidine(49) in tRNA + S-adenosyl-L-methionine = 5-methylcytidine(49) in tRNA + S-adenosyl-L-homocysteine + H(+). The enzyme catalyses cytidine(50) in tRNA + S-adenosyl-L-methionine = 5-methylcytidine(50) in tRNA + S-adenosyl-L-homocysteine + H(+). It catalyses the reaction cytidine(34) in tRNA precursor + S-adenosyl-L-methionine = 5-methylcytidine(34) in tRNA precursor + S-adenosyl-L-homocysteine + H(+). It carries out the reaction a cytidine in mRNA + S-adenosyl-L-methionine = a 5-methylcytidine in mRNA + S-adenosyl-L-homocysteine + H(+). RNA cytosine C(5)-methyltransferase that methylates cytosine to 5-methylcytosine (m5C) in various RNAs, such as tRNAs, mRNAs and some long non-coding RNAs (lncRNAs). Involved in various processes, such as epidermal stem cell differentiation, testis differentiation and maternal to zygotic transition during early development: acts by increasing protein synthesis; cytosine C(5)-methylation promoting tRNA stability and preventing mRNA decay. Methylates cytosine to 5-methylcytosine (m5C) at positions 34 and 48 of intron-containing tRNA(Leu)(CAA) precursors, and at positions 48, 49 and 50 of tRNA(Gly)(GCC) precursors. tRNA methylation is required generation of RNA fragments derived from tRNAs (tRFs). Also mediates C(5)-methylation of mitochondrial tRNAs. Catalyzes cytosine C(5)-methylation of mRNAs, leading to stabilize them and prevent mRNA decay. Cytosine C(5)-methylation of mRNAs also regulates mRNA export. Also mediates cytosine C(5)-methylation of non-coding RNAs, such as vault RNAs (vtRNAs), promoting their processing into regulatory small RNAs. Required for proper spindle assembly and chromosome segregation, independently of its methyltransferase activity. This Xenopus laevis (African clawed frog) protein is RNA cytosine-C(5)-methyltransferase NSUN2.